Here is a 248-residue protein sequence, read N- to C-terminus: D-xylose 1-dehydrogenase (248 aa).

NAD(+) is bound by residues Asp42, Asp68, Asn91, Tyr156, Lys160, Val189, and Thr191. The Proton acceptor role is filled by Tyr156.

Belongs to the short-chain dehydrogenases/reductases (SDR) family.

The enzyme catalyses D-xylose + NAD(+) = D-xylono-1,5-lactone + NADH + H(+). Involved in the degradation of D-xylose. Catalyzes the initial reaction in the xylose utilization pathway by oxydizing D-xylose into D-xylonolactone. Shows some activity with L-arabinose and D-lyxose, but D-xylose is clearly the best substrate. Has no activity with D-ribose, D-glucose, D-galactose or D-mannose. The polypeptide is D-xylose 1-dehydrogenase (Caulobacter vibrioides (strain ATCC 19089 / CIP 103742 / CB 15) (Caulobacter crescentus)).